A 122-amino-acid chain; its full sequence is Large ribosomal subunit protein bL12 (122 aa).

It belongs to the bacterial ribosomal protein bL12 family. As to quaternary structure, homodimer. Part of the ribosomal stalk of the 50S ribosomal subunit. Forms a multimeric L10(L12)X complex, where L10 forms an elongated spine to which 2 to 4 L12 dimers bind in a sequential fashion. Binds GTP-bound translation factors.

Its function is as follows. Forms part of the ribosomal stalk which helps the ribosome interact with GTP-bound translation factors. Is thus essential for accurate translation. The chain is Large ribosomal subunit protein bL12 from Mycoplasma genitalium (strain ATCC 33530 / DSM 19775 / NCTC 10195 / G37) (Mycoplasmoides genitalium).